The chain runs to 187 residues: UPF0301 protein VC_0467 (187 aa).

It belongs to the UPF0301 (AlgH) family.

In Vibrio cholerae serotype O1 (strain ATCC 39315 / El Tor Inaba N16961), this protein is UPF0301 protein VC_0467.